A 183-amino-acid polypeptide reads, in one-letter code: Inosine triphosphate pyrophosphatase (183 aa).

An ITP-binding site is contributed by 8–13 (TGNKNK). Glu36 provides a ligand contact to Mg(2+). ITP contacts are provided by residues Lys48, 64–65 (DT), Lys81, 140–143 (FGWD), Lys161, and 166–167 (HR).

The protein belongs to the HAM1 NTPase family. Homodimer. The cofactor is Mg(2+). Mn(2+) serves as cofactor.

The protein resides in the cytoplasm. It localises to the nucleus. The enzyme catalyses ITP + H2O = IMP + diphosphate + H(+). It carries out the reaction dITP + H2O = dIMP + diphosphate + H(+). The catalysed reaction is XTP + H2O = XMP + diphosphate + H(+). In terms of biological role, pyrophosphatase that hydrolyzes non-canonical purine nucleotides such as inosine triphosphate (ITP), deoxyinosine triphosphate (dITP) or xanthosine 5'-triphosphate (XTP) to their respective monophosphate derivatives. The enzyme does not distinguish between the deoxy- and ribose forms. Probably excludes non-canonical purines from RNA and DNA precursor pools, thus preventing their incorporation into RNA and DNA and avoiding chromosomal lesions. This Emericella nidulans (strain FGSC A4 / ATCC 38163 / CBS 112.46 / NRRL 194 / M139) (Aspergillus nidulans) protein is Inosine triphosphate pyrophosphatase.